We begin with the raw amino-acid sequence, 411 residues long: Adenylosuccinate synthetase (411 aa).

GTP contacts are provided by residues 11–17 (GDEGKGK) and 39–41 (GHT). D12 functions as the Proton acceptor in the catalytic mechanism. Residues D12 and G39 each contribute to the Mg(2+) site. IMP is bound by residues 12–15 (DEGK), 37–40 (NAGH), T121, R135, Q215, T230, and R294. H40 acts as the Proton donor in catalysis. Residue 290-296 (TTTKRPR) participates in substrate binding. GTP is bound by residues R296, 322 to 324 (KLD), and 400 to 402 (STS).

Belongs to the adenylosuccinate synthetase family. As to quaternary structure, homodimer. The cofactor is Mg(2+).

Its subcellular location is the cytoplasm. The enzyme catalyses IMP + L-aspartate + GTP = N(6)-(1,2-dicarboxyethyl)-AMP + GDP + phosphate + 2 H(+). The protein operates within purine metabolism; AMP biosynthesis via de novo pathway; AMP from IMP: step 1/2. Functionally, plays an important role in the de novo pathway of purine nucleotide biosynthesis. Catalyzes the first committed step in the biosynthesis of AMP from IMP. In Helicobacter acinonychis (strain Sheeba), this protein is Adenylosuccinate synthetase.